Consider the following 193-residue polypeptide: Potassium-transporting ATPase KdpC subunit (193 aa).

The helical transmembrane segment at 7-27 threads the bilayer; it reads PLVVIFVVLTAVTGLAYPAVM.

Belongs to the KdpC family. As to quaternary structure, the system is composed of three essential subunits: KdpA, KdpB and KdpC.

The protein resides in the cell inner membrane. In terms of biological role, part of the high-affinity ATP-driven potassium transport (or Kdp) system, which catalyzes the hydrolysis of ATP coupled with the electrogenic transport of potassium into the cytoplasm. This subunit acts as a catalytic chaperone that increases the ATP-binding affinity of the ATP-hydrolyzing subunit KdpB by the formation of a transient KdpB/KdpC/ATP ternary complex. This is Potassium-transporting ATPase KdpC subunit from Burkholderia ambifaria (strain ATCC BAA-244 / DSM 16087 / CCUG 44356 / LMG 19182 / AMMD) (Burkholderia cepacia (strain AMMD)).